We begin with the raw amino-acid sequence, 130 residues long: Small ribosomal subunit protein uS11 (130 aa).

This sequence belongs to the universal ribosomal protein uS11 family. In terms of assembly, part of the 30S ribosomal subunit. Interacts with proteins S7 and S18. Binds to IF-3.

Its function is as follows. Located on the platform of the 30S subunit, it bridges several disparate RNA helices of the 16S rRNA. Forms part of the Shine-Dalgarno cleft in the 70S ribosome. This chain is Small ribosomal subunit protein uS11, found in Dehalococcoides mccartyi (strain ATCC BAA-2100 / JCM 16839 / KCTC 5957 / BAV1).